A 340-amino-acid polypeptide reads, in one-letter code: CMP-N-acetylneuraminate-beta-galactosamide-alpha-2,3-sialyltransferase 1 (340 aa).

The Cytoplasmic segment spans residues 1–13 (MVTLRKRTLKVLT). The helical; Signal-anchor for type II membrane protein transmembrane segment at 14-34 (FLVLFIFLTSFFLNYSHTMVA) threads the bilayer. Residues 35-340 (TTWFPKQMVL…INKIRIFKGR (306 aa)) lie on the Lumenal side of the membrane. 3 cysteine pairs are disulfide-bonded: cysteine 59–cysteine 64, cysteine 61–cysteine 139, and cysteine 142–cysteine 281. N-linked (GlcNAc...) asparagine glycosylation is present at asparagine 79. Glutamine 105 serves as a coordination point for substrate. A glycan (N-linked (GlcNAc...) asparagine) is linked at asparagine 114. 2 residues coordinate substrate: asparagine 147 and asparagine 170. A glycan (N-linked (GlcNAc...) asparagine) is linked at asparagine 201. Residues tyrosine 230, tyrosine 266, glycine 270, glycine 290, histidine 299, and histidine 316 each contribute to the substrate site. Asparagine 323 carries N-linked (GlcNAc...) asparagine glycosylation.

It belongs to the glycosyltransferase 29 family. The soluble form derives from the membrane form by proteolytic processing. As to expression, expressed in several tissues. Highest expression in lung, liver, skeletal muscle, kidney, pancreas, spleen and placenta.

The protein localises to the golgi apparatus. It localises to the golgi stack membrane. The protein resides in the trans-Golgi network membrane. Its subcellular location is the secreted. It carries out the reaction a beta-D-galactosyl-(1-&gt;3)-N-acetyl-alpha-D-galactosaminyl derivative + CMP-N-acetyl-beta-neuraminate = an N-acetyl-alpha-neuraminyl-(2-&gt;3)-beta-D-galactosyl-(1-&gt;3)-N-acetyl-alpha-D-galactosaminyl derivative + CMP + H(+). The enzyme catalyses a ganglioside GM1 + CMP-N-acetyl-beta-neuraminate = a ganglioside GD1a + CMP + H(+). It catalyses the reaction a ganglioside GM1 (d18:1(4E)) + CMP-N-acetyl-beta-neuraminate = a ganglioside GD1a (d18:1(4E)) + CMP + H(+). The catalysed reaction is ganglioside GM1 (d18:1(4E)/18:0) + CMP-N-acetyl-beta-neuraminate = ganglioside GD1a (18:1(4E)/18:0) + CMP + H(+). It carries out the reaction a ganglioside GA1 + CMP-N-acetyl-beta-neuraminate = a ganglioside GM1b + CMP + H(+). The enzyme catalyses a ganglioside GA1 (d18:1(4E)) + CMP-N-acetyl-beta-neuraminate = a ganglioside GM1b (d18:1(4E)) + CMP + H(+). It catalyses the reaction a ganglioside GD1b + CMP-N-acetyl-beta-neuraminate = a ganglioside GT1b + CMP + H(+). The catalysed reaction is a 3-O-[beta-D-galactosyl-(1-&gt;3)-N-acetyl-alpha-D-galactosaminyl]-L-threonyl-[protein] + CMP-N-acetyl-beta-neuraminate = a 3-O-[N-acetyl-alpha-neuraminyl-(2-&gt;3)-beta-D-galactosyl-(1-&gt;3)-N-acetyl-alpha-D-galactosaminyl]-L-threonyl-[protein] + CMP + H(+). It carries out the reaction a 3-O-[beta-D-galactosyl-(1-&gt;3)-N-acetyl-alpha-D-galactosaminyl]-L-seryl-[protein] + CMP-N-acetyl-beta-neuraminate = 3-O-[N-acetyl-alpha-neuraminyl-(2-&gt;3)-beta-D-galactosyl-(1-&gt;3)-N-acetyl-alpha-D-galactosaminyl]-L-seryl-[protein] + CMP + H(+). The protein operates within protein modification; protein glycosylation. It participates in glycolipid biosynthesis. A beta-galactoside alpha2-&gt;3 sialyltransferase involved in terminal sialylation of glycoproteins and glycolipids. Catalyzes the transfer of sialic acid (N-acetyl-neuraminic acid; Neu5Ac) from the nucleotide sugar donor CMP-Neu5Ac onto acceptor Galbeta-(1-&gt;3)-GalNAc-terminated glycoconjugates through an alpha2-3 linkage. Adds sialic acid to the core 1 O-glycan, Galbeta-(1-&gt;3)-GalNAc-O-Ser/Thr, which is a major structure of mucin-type O-glycans. As part of a homeostatic mechanism that regulates CD8-positive T cell numbers, sialylates core 1 O-glycans of T cell glycoproteins, SPN/CD43 and PTPRC/CD45. Prevents premature apoptosis of thymic CD8-positive T cells prior to peripheral emigration, whereas in the secondary lymphoid organs controls the survival of CD8-positive memory T cells generated following a successful immune response. Transfers sialic acid to asialofetuin, presumably onto Galbeta-(1-&gt;3)-GalNAc-O-Ser. Sialylates GM1a, GA1 and GD1b gangliosides to form GD1a, GM1b and GT1b, respectively. The sequence is that of CMP-N-acetylneuraminate-beta-galactosamide-alpha-2,3-sialyltransferase 1 from Homo sapiens (Human).